The primary structure comprises 419 residues: Putative zinc metalloprotease SPy_1963/M5005_Spy1674 (419 aa).

A Zn(2+)-binding site is contributed by His-18. Glu-19 is an active-site residue. His-22 is a binding site for Zn(2+). 4 helical membrane passes run 169 to 191 (LITNFAGPMNNFILGIVVFILLV), 301 to 323 (LAWSRAFTILNALKGLITGFSLN), 343 to 365 (LESVLSLMAMLSINLGIFNLIPI), and 392 to 411 (AYITLAGVAIMVVLMIAVTW). The 100-residue stretch at 175–274 (GPMNNFILGI…LKTVAVKPQK (100 aa)) folds into the PDZ domain.

The protein belongs to the peptidase M50B family. Zn(2+) is required as a cofactor.

The protein localises to the cell membrane. This chain is Putative zinc metalloprotease SPy_1963/M5005_Spy1674, found in Streptococcus pyogenes serotype M1.